The primary structure comprises 204 residues: Inactive ribonuclease-like protein 9 (204 aa).

A signal peptide spans 1-26; it reads MMRTLITIHPLPLLLLLQQLLQPVQF. Intrachain disulfides connect C97/C152, C115/C167, and C122/C129. 2 N-linked (GlcNAc...) asparagine glycosylation sites follow: N130 and N142.

This sequence belongs to the pancreatic ribonuclease family.

The protein localises to the secreted. In terms of biological role, does not exhibit any ribonuclease activity. This is Inactive ribonuclease-like protein 9 (RNASE9) from Pongo pygmaeus (Bornean orangutan).